We begin with the raw amino-acid sequence, 269 residues long: NAD kinase (269 aa).

The Proton acceptor role is filled by Asp45. NAD(+)-binding positions include 45-46, 121-122, Arg147, Asp149, 160-165, and Ala184; these read DG, NE, and TAYNRS.

It belongs to the NAD kinase family. The cofactor is a divalent metal cation.

Its subcellular location is the cytoplasm. It catalyses the reaction NAD(+) + ATP = ADP + NADP(+) + H(+). Functionally, involved in the regulation of the intracellular balance of NAD and NADP, and is a key enzyme in the biosynthesis of NADP. Catalyzes specifically the phosphorylation on 2'-hydroxyl of the adenosine moiety of NAD to yield NADP. In Pediococcus pentosaceus (strain ATCC 25745 / CCUG 21536 / LMG 10740 / 183-1w), this protein is NAD kinase.